We begin with the raw amino-acid sequence, 145 residues long: 3-dehydroquinate dehydratase (145 aa).

Tyrosine 23 functions as the Proton acceptor in the catalytic mechanism. Substrate is bound by residues asparagine 75, histidine 81, and aspartate 88. Histidine 101 (proton donor) is an active-site residue. Substrate is bound by residues 102-103 (IS) and arginine 112.

Belongs to the type-II 3-dehydroquinase family. Homododecamer.

It catalyses the reaction 3-dehydroquinate = 3-dehydroshikimate + H2O. It participates in metabolic intermediate biosynthesis; chorismate biosynthesis; chorismate from D-erythrose 4-phosphate and phosphoenolpyruvate: step 3/7. In terms of biological role, catalyzes a trans-dehydration via an enolate intermediate. This is 3-dehydroquinate dehydratase from Caldicellulosiruptor saccharolyticus (strain ATCC 43494 / DSM 8903 / Tp8T 6331).